The primary structure comprises 1751 residues: Non-reducing polyketide synthase afvB (1751 aa).

The interval 19 to 249 (FRRLRLHSKC…PLPVYGGPCH (231 aa)) is N-terminal acylcarrier protein transacylase domain (SAT). Residues 381 to 811 (HEKIAVIGMS…GGNTSLLLEE (431 aa)) form the Ketosynthase family 3 (KS3) domain. Catalysis depends on for beta-ketoacyl synthase activity residues C554, H689, and H730. The tract at residues 910-1228 (FVFSGQGSFS…SMSALHSAGV (319 aa)) is malonyl-CoA:ACP transacylase (MAT) domain. The product template (PT) domain stretch occupies residues 1291–1607 (TALVHHILEE…PRILMSRFFD (317 aa)). Positions 1295 to 1429 (HHILEESFGK…GVVTCGDSHS (135 aa)) are N-terminal hotdog fold. The region spanning 1295 to 1603 (HHILEESFGK…LRPLPRILMS (309 aa)) is the PKS/mFAS DH domain. The active-site Proton acceptor; for dehydratase activity is H1327. The tract at residues 1456–1603 (LASRVSKDLV…LRPLPRILMS (148 aa)) is C-terminal hotdog fold. D1514 (proton donor; for dehydratase activity) is an active-site residue. The interval 1610–1670 (DSQYGQMAQQ…KAPISGSWPN (61 aa)) is disordered. The segment covering 1612 to 1657 (QYGQMAQQEPSTALPSTPQHTSSAKTTESTPSQQDESDNTSLATPE) has biased composition (polar residues). The Carrier domain maps to 1670–1747 (NANSQLVRDA…DLKAYLEGNQ (78 aa)). The residue at position 1707 (S1707) is an O-(pantetheine 4'-phosphoryl)serine.

Requires pantetheine 4'-phosphate as cofactor. As to expression, expressed mainly in sclerotia, with expression levels 20-fold and 10-fold greater than the expression levels of this gene found in mycelium and conidia, respectively.

It participates in secondary metabolite biosynthesis. In terms of biological role, non-reducing polyketide synthase (NRPKS); part of the gene cluster that mediates the biosynthesis of aflavarin, a bicoumarin that exhibits anti-insectan activity against the fungivorous beetle C.hemipterus. Catalyzes the formation of the aromatic polyketide from acetyl coenzyme A and seven malonyl coenzyme A molecules. The chain is Non-reducing polyketide synthase afvB from Aspergillus flavus (strain ATCC 200026 / FGSC A1120 / IAM 13836 / NRRL 3357 / JCM 12722 / SRRC 167).